Here is a 1087-residue protein sequence, read N- to C-terminus: Synaptopodin-2 (1087 aa).

One can recognise a PDZ domain in the interval Phe6–Ser88. Disordered stretches follow at residues Gly24–Glu52, Ser88–Pro112, and Gly207–Pro272. The segment covering Thr101–Pro112 has biased composition (basic and acidic residues). Composition is skewed to polar residues over residues Gly207–Glu230 and Thr246–Gly255. Ser300, Ser319, and Ser320 each carry phosphoserine. Residues Ser320–Val359 form a disordered region. The segment covering Gly322–Arg337 has biased composition (basic and acidic residues). Thr323 carries the phosphothreonine modification. Basic residues predominate over residues Pro338–Leu348. A compositionally biased stretch (basic and acidic residues) spans Arg349–Val359. The Nuclear localization signal signature appears at Lys388 to Lys396. Residues Ser540, Ser541, Ser543, and Ser546 each carry the phosphoserine modification. The tract at residues Arg551–Pro557 is interaction with YWHAB. Ser555 bears the Phosphoserine; by PKA mark. Disordered regions lie at residues Ala581–Leu817 and Asn832–Gly863. Ser596 carries the phosphoserine modification. The interaction with YWHAB stretch occupies residues Arg599–Pro804. At Thr602 the chain carries Phosphothreonine; by PKA and CaMK2. Ser603 is subject to Phosphoserine. Pro residues-rich tracts occupy residues Pro609–Glu622 and Ala636–Trp647. A PPPY motif motif is present at residues Pro611–Tyr614. At Tyr614 the chain carries Phosphotyrosine. Ser618 carries the post-translational modification Phosphoserine. Residues Ser656–Val796 form an F-actin binding region. An F-actin bundling activity region spans residues Ser656–Asn909. Interaction with ACTN2 stretches follow at residues Ser656–Ala917 and Gln894–Glu1087. Residues Ser697 and Ser719 each carry the phosphoserine modification. The tract at residues Ala740–Ala893 is actin binding. Thr744 is modified (phosphothreonine). Positions Lys751–Ala777 are enriched in low complexity. 2 positions are modified to phosphoserine: Ser767 and Ser771. Over residues Ala781–Ser797 the composition is skewed to polar residues. The tract at residues Gln803–Glu1087 is interaction with FLNC. Phosphoserine is present on residues Ser895, Ser899, and Ser903. Disordered regions lie at residues Ala930–Leu952, Phe970–Ala1012, and Pro1037–Tyr1060. The interval Pro993–Ala1012 is interaction with ZYX. Ser1008 and Ser1050 each carry phosphoserine. Residues Pro1037–Pro1051 are compositionally biased toward low complexity.

The protein belongs to the synaptopodin family. In terms of assembly, may self-associate in muscle cells under oxidative stress. Binds F-actin. Interacts with ACTN2; ACTN2 is proposed to anchor SYOP2 at Z lines in mature myocytes. Interacts with AKAP6, PPP3CA and CAMK2A. Interacts (phosphorylated form) with YWHAB; YWHAB competes with ACTN2 for interaction with SYNPO2. Interacts with KPNA2; mediating nuclear import of SYNOP2; dependent on interaction with YWHAB. Interacts with IPO13; may be implicated in SYNOP2 nuclear import. Interacts with ZYX, FLNC, ILK. Interacts with BAG3 (via WW 1 domain). May associate with the CASA complex consisting of HSPA8, HSPB8 and BAG3. Interacts with VPS18. Post-translationally, phosphorylated by PKA, and by CaMK2 at multiple sites. Dephosphorylated by calcineurin at Ser-555 and Thr-602; abrogating interaction with YWHAB and impairing nuclear import. In terms of tissue distribution, expressed in skeletal muscle, heart, colon, stomach, uterus and lung. Expression is restricted to muscle cell layers in colon, uterus and stomach.

It is found in the nucleus. The protein resides in the cytoplasm. Its subcellular location is the myofibril. The protein localises to the sarcomere. It localises to the z line. It is found in the cell junction. The protein resides in the focal adhesion. Its function is as follows. Has an actin-binding and actin-bundling activity. Can induce the formation of F-actin networks. At the sarcomeric Z lines is proposed to act as adapter protein that links nascent myofibers to the sarcolemma via ZYX and may play a role in early assembly and stabilization of the Z lines. Involved in autophagosome formation. May play a role in chaperone-assisted selective autophagy (CASA) involved in Z lines maintenance in striated muscle under mechanical tension; may link the client-processing CASA chaperone machinery to a membrane-tethering and fusion complex providing autophagosome membranes. Involved in regulation of cell migration. May be a tumor suppressor. The polypeptide is Synaptopodin-2 (Synpo2) (Mus musculus (Mouse)).